The sequence spans 484 residues: MSLSTLSHPAAAAAGSGKSLFPAGPAAQSVHFPKARLPVPAAVSAATAAVHAEDRVSSLTQVSGVLGSQWGDEGKGKLVDVLAPRFDIVARCQGGANAGHTIYNSEGKKFALHLVPSGILHEGTLCVVGNGAVIHVPGFFGEIDGLESNGVRCGGRILVSDRAHLLFDLHQAVDGLREAELENSFIGTTKRGIGPCYSSKVTRNGLRVCDLRHMDTFGDKLDILFKDAASRFQGFQYSKSLLKEEVERYKKFADRLEPFIADTVHVLNESIKQKKKILVEGGQATMLDIDFGTYPFVTSSSPSAGGICTGLGIAPRAIGDLIGVVKAYTSRVGSGPFPTELFGEEGDRLRKAGMEFGTTTGRPRRCGWLDIVALKHSCQINGFSSLNLTKLDVLSGLSEIKVGVSYTQTDGQKLQSFPGDLDTLEQVQVNYEVLPGWQSDISSVRRYDELPQAARLYVERIEELVGVPVHYIGVGPGRDALIYK.

The N-terminal 44 residues, methionine 1 to serine 44, are a transit peptide targeting the chloroplast. GTP-binding positions include glycine 71–lysine 77 and glycine 99–threonine 101. Aspartate 72 functions as the Proton acceptor in the catalytic mechanism. Residues aspartate 72 and glycine 99 each coordinate Mg(2+). IMP-binding positions include aspartate 72–lysine 75, asparagine 97–histidine 100, threonine 189, arginine 203, glutamine 283, threonine 298, and arginine 362. Histidine 100 acts as the Proton donor in catalysis. Threonine 358–arginine 364 provides a ligand contact to substrate. Residues arginine 364, lysine 390–aspartate 392, and glycine 473–glycine 475 contribute to the GTP site.

This sequence belongs to the adenylosuccinate synthetase family. As to quaternary structure, homodimer. Mg(2+) is required as a cofactor.

The protein localises to the plastid. Its subcellular location is the chloroplast. It carries out the reaction IMP + L-aspartate + GTP = N(6)-(1,2-dicarboxyethyl)-AMP + GDP + phosphate + 2 H(+). It participates in purine metabolism; AMP biosynthesis via de novo pathway; AMP from IMP: step 1/2. Its function is as follows. Plays an important role in the de novo pathway and in the salvage pathway of purine nucleotide biosynthesis. Catalyzes the first committed step in the biosynthesis of AMP from IMP. This is Adenylosuccinate synthetase, chloroplastic from Zea mays (Maize).